The primary structure comprises 429 residues: Serum response factor-binding protein 1 (429 aa).

Position 2 is an N-acetylalanine (A2). 2 coiled-coil regions span residues 42-67 (KGTE…AMKE) and 108-144 (LLKK…EDNH). 2 stretches are compositionally biased toward polar residues: residues 128 to 138 (QNVTEVESSKN) and 146 to 160 (KNTL…NLQR). Disordered stretches follow at residues 128 to 285 (QNVT…GDDF) and 311 to 429 (EKVF…TFDD). The span at 183–195 (NSKEKIAKMEHGP) shows a compositional bias: basic and acidic residues. K190 participates in a covalent cross-link: Glycyl lysine isopeptide (Lys-Gly) (interchain with G-Cter in SUMO2). 5 positions are modified to phosphoserine: S203, S205, S264, S279, and S281. Acidic residues predominate over residues 249–265 (GGEELCEEEKEYFDDST). The span at 311 to 341 (EKVFLKEDTGETHGDTRNDKTKPSTETRKLE) shows a compositional bias: basic and acidic residues. A Glycyl lysine isopeptide (Lys-Gly) (interchain with G-Cter in SUMO2) cross-link involves residue K316. A phosphoserine mark is found at S349, S351, and S367. Residues 357–367 (NFKEQAPKTRS) show a composition bias toward basic and acidic residues. A compositionally biased stretch (polar residues) spans 373 to 383 (NEPQFKNQFNK).

Interacts with SRF. Forms complexes with SRF and SRF cofactors ARID2, MYOCD and NKX2-5. Interacts with the N-terminus of SLC2A4.

The protein resides in the cytoplasm. Its subcellular location is the perinuclear region. May be involved in regulating transcriptional activation of cardiac genes during the aging process. May play a role in biosynthesis and/or processing of SLC2A4 in adipose cells. This is Serum response factor-binding protein 1 from Pongo abelii (Sumatran orangutan).